Consider the following 138-residue polypeptide: Large ribosomal subunit protein eL27 (138 aa).

The protein belongs to the eukaryotic ribosomal protein eL27 family.

The polypeptide is Large ribosomal subunit protein eL27 (RPL27) (Solanum tuberosum (Potato)).